The following is a 310-amino-acid chain: UDP-N-acetylenolpyruvoylglucosamine reductase (310 aa).

Residues K31–A216 enclose the FAD-binding PCMH-type domain. The active site involves R180. The active-site Proton donor is S230. E300 is an active-site residue.

The protein belongs to the MurB family. Requires FAD as cofactor.

The protein resides in the cytoplasm. It carries out the reaction UDP-N-acetyl-alpha-D-muramate + NADP(+) = UDP-N-acetyl-3-O-(1-carboxyvinyl)-alpha-D-glucosamine + NADPH + H(+). It participates in cell wall biogenesis; peptidoglycan biosynthesis. Functionally, cell wall formation. This Lachnoclostridium phytofermentans (strain ATCC 700394 / DSM 18823 / ISDg) (Clostridium phytofermentans) protein is UDP-N-acetylenolpyruvoylglucosamine reductase.